A 124-amino-acid polypeptide reads, in one-letter code: Ribonuclease pancreatic (124 aa).

Over residues 1–13 (KESAAAKFERQHM) the composition is skewed to basic and acidic residues. Residues 1-24 (KESAAAKFERQHMDSSTSSASSSN) form a disordered region. The substrate site is built by lysine 7 and arginine 10. Histidine 12 serves as the catalytic Proton acceptor. 4 disulfide bridges follow: cysteine 26/cysteine 84, cysteine 40/cysteine 95, cysteine 58/cysteine 110, and cysteine 65/cysteine 72. Asparagine 34 carries an N-linked (GlcNAc...) asparagine; partial glycan. Substrate-binding positions include 41–45 (KPVNT), lysine 66, and arginine 85. Residue histidine 119 is the Proton donor of the active site.

Belongs to the pancreatic ribonuclease family. Monomer. Interacts with and forms tight 1:1 complexes with RNH1. Dimerization of two such complexes may occur. Interaction with RNH1 inhibits this protein. Pancreas.

The protein resides in the secreted. The enzyme catalyses an [RNA] containing cytidine + H2O = an [RNA]-3'-cytidine-3'-phosphate + a 5'-hydroxy-ribonucleotide-3'-[RNA].. The catalysed reaction is an [RNA] containing uridine + H2O = an [RNA]-3'-uridine-3'-phosphate + a 5'-hydroxy-ribonucleotide-3'-[RNA].. In terms of biological role, endonuclease that catalyzes the cleavage of RNA on the 3' side of pyrimidine nucleotides. Acts on single-stranded and double-stranded RNA. This chain is Ribonuclease pancreatic (RNASE1), found in Ovis aries (Sheep).